A 400-amino-acid polypeptide reads, in one-letter code: NAD-dependent protein deacetylase sirtuin-7 (400 aa).

The tract at residues 1-28 (MAAGGLSRSERKAAERVRRLREEQQRER) is disordered. The segment covering 8 to 28 (RSERKAAERVRRLREEQQRER) has biased composition (basic and acidic residues). Residues 82 to 329 (PEELQRKVRE…QLLMDELGLE (248 aa)) form the Deacetylase sirtuin-type domain. Residues 107–126 (GAGI…NGVW) and 167–170 (QNCD) contribute to the NAD(+) site. His187 (proton acceptor) is an active-site residue. Residues Cys195, Cys198, Cys225, and Cys228 each coordinate Zn(2+). NAD(+) contacts are provided by residues 268 to 270 (GSS), 297 to 299 (NLQ), and Cys315. A disordered region spans residues 354 to 380 (SHSRKSLCRSREEPGPGDRGAPLSSAP). At Arg388 the chain carries Asymmetric dimethylarginine; alternate. Arg388 bears the Omega-N-methylarginine; alternate mark.

It belongs to the sirtuin family. Class IV subfamily. In terms of assembly, interacts with UBTF and the RNA polymerase I complex. Interacts with components of the B-WICH complex, such as MYBBP1A, SMARCA5/SNF2H and BAZ1B/WSTF. Interacts with ELK4, leading to stabilization at target promoters for H3K18Ac deacetylation. Interacts with histone H2A and/or histone H2B. Interacts with DNMT1. Interacts with SIRT1. Zn(2+) serves as cofactor. Phosphorylated during mitosis. Post-translationally, methylation at Arg-388 by PRMT6 inhibits the H3K18Ac histone deacetylase activity, promoting mitochondria biogenesis and maintaining mitochondria respiration. In terms of processing, ubiquitinated via 'Lys-63'-linked ubiquitin chains. Deubiquitinated by USP7, inhibiting the H3K18Ac histone deacetylase activity and regulating gluconeogenesis. Ubiquitinated by E3 ubiquitin-protein ligase complex containing FBXO7; leading to proteasomal degradation.

The protein localises to the nucleus. It localises to the nucleolus. It is found in the nucleoplasm. Its subcellular location is the chromosome. The protein resides in the cytoplasm. It carries out the reaction N(6)-acetyl-L-lysyl-[protein] + NAD(+) + H2O = 2''-O-acetyl-ADP-D-ribose + nicotinamide + L-lysyl-[protein]. The enzyme catalyses N(6)-glutaryl-L-lysyl-[protein] + NAD(+) + H2O = 2''-O-glutaryl-ADP-D-ribose + nicotinamide + L-lysyl-[protein]. The catalysed reaction is N(6)-succinyl-L-lysyl-[protein] + NAD(+) + H2O = 2''-O-succinyl-ADP-D-ribose + nicotinamide + L-lysyl-[protein]. It catalyses the reaction N(6)-propanoyl-L-lysyl-[protein] + NAD(+) + H2O = 3''-O-propanoyl-ADP-D-ribose + nicotinamide + L-lysyl-[protein]. It carries out the reaction N(6)-decanoyl-L-lysyl-[protein] + NAD(+) + H2O = 2''-O-decanoyl-ADP-D-ribose + nicotinamide + L-lysyl-[protein]. With respect to regulation, NAD-dependent protein-lysine deacetylase and deacylase activities are activated by nucleic acids. Histone deacetylase activity is activated by DNA. Protein-lysine deacylase activity is activated by RNA. H3K18Ac histone deacetylase activity is inhibited by methylation at Arg-388. H3K18Ac histone deacetylase activity is inhibited by deubiquitination by USP7. Its function is as follows. NAD-dependent protein-lysine deacylase that can act both as a deacetylase or deacylase (desuccinylase, depropionylase, deglutarylase and dedecanoylase), depending on the context. Specifically mediates deacetylation of histone H3 at 'Lys-18' (H3K18Ac). In contrast to other histone deacetylases, displays strong preference for a specific histone mark, H3K18Ac, directly linked to control of gene expression. H3K18Ac is mainly present around the transcription start site of genes and has been linked to activation of nuclear hormone receptors; SIRT7 thereby acts as a transcription repressor. Moreover, H3K18 hypoacetylation has been reported as a marker of malignancy in various cancers and seems to maintain the transformed phenotype of cancer cells. Also able to mediate deacetylation of histone H3 at 'Lys-36' (H3K36Ac) in the context of nucleosomes. Also mediates deacetylation of non-histone proteins, such as ATM, CDK9, DDX21, DDB1, FBL, FKBP5/FKBP51, GABPB1, RAN, RRP9/U3-55K and POLR1E/PAF53. Enriched in nucleolus where it stimulates transcription activity of the RNA polymerase I complex. Acts by mediating the deacetylation of the RNA polymerase I subunit POLR1E/PAF53, thereby promoting the association of RNA polymerase I with the rDNA promoter region and coding region. In response to metabolic stress, SIRT7 is released from nucleoli leading to hyperacetylation of POLR1E/PAF53 and decreased RNA polymerase I transcription. Required to restore the transcription of ribosomal RNA (rRNA) at the exit from mitosis. Promotes pre-ribosomal RNA (pre-rRNA) cleavage at the 5'-terminal processing site by mediating deacetylation of RRP9/U3-55K, a core subunit of the U3 snoRNP complex. Mediates 'Lys-37' deacetylation of Ran, thereby regulating the nuclear export of NF-kappa-B subunit RELA/p65. Acts as a regulator of DNA damage repair by mediating deacetylation of ATM during the late stages of DNA damage response, promoting ATM dephosphorylation and deactivation. Suppresses the activity of the DCX (DDB1-CUL4-X-box) E3 ubiquitin-protein ligase complexes by mediating deacetylation of DDB1, which prevents the interaction between DDB1 and CUL4 (CUL4A or CUL4B). Activates RNA polymerase II transcription by mediating deacetylation of CDK9, thereby promoting 'Ser-2' phosphorylation of the C-terminal domain (CTD) of RNA polymerase II. Deacetylates FBL, promoting histone-glutamine methyltransferase activity of FBL. Acts as a regulator of mitochondrial function by catalyzing deacetylation of GABPB1. Regulates Akt/AKT1 activity by mediating deacetylation of FKBP5/FKBP51. Required to prevent R-loop-associated DNA damage and transcription-associated genomic instability by mediating deacetylation and subsequent activation of DDX21, thereby overcoming R-loop-mediated stalling of RNA polymerases. In addition to protein deacetylase activity, also acts as a protein-lysine deacylase. Acts as a protein depropionylase by mediating depropionylation of Osterix (SP7), thereby regulating bone formation by osteoblasts. Acts as a histone deglutarylase by mediating deglutarylation of histone H4 on 'Lys-91' (H4K91glu); a mark that destabilizes nucleosomes by promoting dissociation of the H2A-H2B dimers from nucleosomes. Acts as a histone desuccinylase: in response to DNA damage, recruited to DNA double-strand breaks (DSBs) and catalyzes desuccinylation of histone H3 on 'Lys-122' (H3K122succ), thereby promoting chromatin condensation and DSB repair. Also promotes DSB repair by promoting H3K18Ac deacetylation, regulating non-homologous end joining (NHEJ). Along with its role in DNA repair, required for chromosome synapsis during prophase I of female meiosis by catalyzing H3K18Ac deacetylation. Involved in transcriptional repression of LINE-1 retrotransposon via H3K18Ac deacetylation, and promotes their association with the nuclear lamina. Required to stabilize ribosomal DNA (rDNA) heterochromatin and prevent cellular senescence induced by rDNA instability. Acts as a negative regulator of SIRT1 by preventing autodeacetylation of SIRT1, restricting SIRT1 deacetylase activity. In Bos taurus (Bovine), this protein is NAD-dependent protein deacetylase sirtuin-7 (SIRT7).